Consider the following 440-residue polypeptide: uncharacterized protein (440 aa).

Helical transmembrane passes span Met1–Arg21, Thr29–Glu49, Leu70–Ile90, Val101–Met121, Thr179–Gly199, Phe226–Ser246, Ile258–Phe278, Ile343–Phe363, Ile366–Gly386, and Phe389–Ile409.

Belongs to the dicarboxylate/amino acid:cation symporter (DAACS) (TC 2.A.23) family.

The protein localises to the cell membrane. This is an uncharacterized protein from Haemophilus influenzae (strain ATCC 51907 / DSM 11121 / KW20 / Rd).